A 617-amino-acid polypeptide reads, in one-letter code: Proline--tRNA ligase (617 aa).

Belongs to the class-II aminoacyl-tRNA synthetase family. ProS type 1 subfamily. As to quaternary structure, homodimer.

The protein localises to the cytoplasm. It catalyses the reaction tRNA(Pro) + L-proline + ATP = L-prolyl-tRNA(Pro) + AMP + diphosphate. Its function is as follows. Catalyzes the attachment of proline to tRNA(Pro) in a two-step reaction: proline is first activated by ATP to form Pro-AMP and then transferred to the acceptor end of tRNA(Pro). As ProRS can inadvertently accommodate and process non-cognate amino acids such as alanine and cysteine, to avoid such errors it has two additional distinct editing activities against alanine. One activity is designated as 'pretransfer' editing and involves the tRNA(Pro)-independent hydrolysis of activated Ala-AMP. The other activity is designated 'posttransfer' editing and involves deacylation of mischarged Ala-tRNA(Pro). The misacylated Cys-tRNA(Pro) is not edited by ProRS. This is Proline--tRNA ligase from Streptococcus agalactiae serotype V (strain ATCC BAA-611 / 2603 V/R).